The following is a 127-amino-acid chain: Fluoride-specific ion channel FluC (127 aa).

4 helical membrane-spanning segments follow: residues leucine 4 to glycine 24, glycine 36 to alanine 56, valine 72 to isoleucine 92, and phenylalanine 101 to valine 121. Residues glycine 76 and threonine 79 each coordinate Na(+).

It belongs to the fluoride channel Fluc/FEX (TC 1.A.43) family.

Its subcellular location is the cell inner membrane. The catalysed reaction is fluoride(in) = fluoride(out). Its activity is regulated as follows. Na(+) is not transported, but it plays an essential structural role and its presence is essential for fluoride channel function. Functionally, fluoride-specific ion channel. Important for reducing fluoride concentration in the cell, thus reducing its toxicity. This Caulobacter vibrioides (strain ATCC 19089 / CIP 103742 / CB 15) (Caulobacter crescentus) protein is Fluoride-specific ion channel FluC.